The following is a 183-amino-acid chain: Adenine phosphoribosyltransferase (183 aa).

This sequence belongs to the purine/pyrimidine phosphoribosyltransferase family. As to quaternary structure, homodimer.

The protein localises to the cytoplasm. It catalyses the reaction AMP + diphosphate = 5-phospho-alpha-D-ribose 1-diphosphate + adenine. Its pathway is purine metabolism; AMP biosynthesis via salvage pathway; AMP from adenine: step 1/1. In terms of biological role, catalyzes a salvage reaction resulting in the formation of AMP, that is energically less costly than de novo synthesis. In Salmonella gallinarum (strain 287/91 / NCTC 13346), this protein is Adenine phosphoribosyltransferase.